A 309-amino-acid polypeptide reads, in one-letter code: Probable HTH-type transcriptional regulator LtrA (309 aa).

Residues 1 to 61 (MNLNLLPDLA…QRTTRKLRLS (61 aa)) enclose the HTH lysR-type domain. A DNA-binding region (H-T-H motif) is located at residues 21 to 40 (FSAVARQNGITPSAVSRSVS).

It belongs to the LysR transcriptional regulatory family.

The chain is Probable HTH-type transcriptional regulator LtrA (ltrA) from Klebsiella pneumoniae.